The sequence spans 368 residues: MKVSAIAAVAALAAVAVAGPVRPSGDKYLIELGPGKTQWVTKDQKHKMRAAGQTFIDITNEIGTNFVATKPVAANYPKNIAHPSMVSSMIANLSKENLMRDLQAMSEFNNRYYESQTGVESANWLMEQVKKVIDESGAQGAKVEKIENQFNQFNIIATIPGSSESTVIVGAHQDSINQEDPMGGRAPGADDNGSGSVVVLEALRGVLGSKAFRAANNTNTLEFHWYAGEEGGLLGSQTVFSKYKSDGRQVKAMLNQDLAGFKGQGQEQFGLITDNTNQELNQFCKMIVEKYASIPIVDTECGYACSDHASADRNGFPASMVAETAFEDSNPHIHSADDTVEYLDFDHMLEHAKVALGFMTELGMASNL.

The signal sequence occupies residues methionine 1–alanine 18. N-linked (GlcNAc...) asparagine glycosylation is present at asparagine 92. Residues histidine 172 and aspartate 191 each coordinate Zn(2+). N-linked (GlcNAc...) asparagine glycans are attached at residues asparagine 192 and asparagine 216. Zn(2+)-binding residues include glutamate 230 and aspartate 257. Cysteine 301 and cysteine 305 are joined by a disulfide. Histidine 334 is a Zn(2+) binding site.

The protein belongs to the peptidase M28 family. M28E subfamily. In terms of assembly, monomer. Zn(2+) serves as cofactor.

The protein localises to the secreted. Functionally, probable extracellular aminopeptidase which contributes to pathogenicity. In Arthroderma benhamiae (strain ATCC MYA-4681 / CBS 112371) (Trichophyton mentagrophytes), this protein is Probable leucine aminopeptidase ARB_03492.